Reading from the N-terminus, the 216-residue chain is Ribonuclease HII (216 aa).

The 189-residue stretch at A28–E216 folds into the RNase H type-2 domain. 3 residues coordinate a divalent metal cation: D34, E35, and D126.

The protein belongs to the RNase HII family. Requires Mn(2+) as cofactor. Mg(2+) serves as cofactor.

It localises to the cytoplasm. It carries out the reaction Endonucleolytic cleavage to 5'-phosphomonoester.. Endonuclease that specifically degrades the RNA of RNA-DNA hybrids. The polypeptide is Ribonuclease HII (Geotalea uraniireducens (strain Rf4) (Geobacter uraniireducens)).